The chain runs to 89 residues: Small ribosomal subunit protein uS15 (89 aa).

Basic and acidic residues predominate over residues 1-21; the sequence is MVLDPTQKKSVIDAHAKHEGD. A disordered region spans residues 1-24; the sequence is MVLDPTQKKSVIDAHAKHEGDTGS.

The protein belongs to the universal ribosomal protein uS15 family. In terms of assembly, part of the 30S ribosomal subunit. Forms a bridge to the 50S subunit in the 70S ribosome, contacting the 23S rRNA.

Its function is as follows. One of the primary rRNA binding proteins, it binds directly to 16S rRNA where it helps nucleate assembly of the platform of the 30S subunit by binding and bridging several RNA helices of the 16S rRNA. Functionally, forms an intersubunit bridge (bridge B4) with the 23S rRNA of the 50S subunit in the ribosome. The polypeptide is Small ribosomal subunit protein uS15 (Desulfovibrio desulfuricans (strain ATCC 27774 / DSM 6949 / MB)).